Reading from the N-terminus, the 271-residue chain is MFDDQQAPQLRLFVISDSIGETAQRMIHATLTQFPDISQIEIKKYPFIKNEEELMHILNRAKELNAVVVTTLVNPDFNIAGQHLAKKLQIPYIDYMSDLIGIIQQQTQCNPILESGALRKLDENYFKRIEAMEYAVKYDDGKHFTDIGEADALIVGVSRTSKTPLSMYLANKGYKIANIPLVLEVDIPDEVFKHKHLKVFGLTASPDYILNIRNERVKILGLSGPSNYNSMDRIREELIHAEEVFEKLNATVINTEYKSIEESAFYIEKCL.

156 to 163 (GVSRTSKT) provides a ligand contact to ADP.

It belongs to the pyruvate, phosphate/water dikinase regulatory protein family. PDRP subfamily.

The catalysed reaction is N(tele)-phospho-L-histidyl/L-threonyl-[pyruvate, phosphate dikinase] + ADP = N(tele)-phospho-L-histidyl/O-phospho-L-threonyl-[pyruvate, phosphate dikinase] + AMP + H(+). It catalyses the reaction N(tele)-phospho-L-histidyl/O-phospho-L-threonyl-[pyruvate, phosphate dikinase] + phosphate + H(+) = N(tele)-phospho-L-histidyl/L-threonyl-[pyruvate, phosphate dikinase] + diphosphate. Bifunctional serine/threonine kinase and phosphorylase involved in the regulation of the pyruvate, phosphate dikinase (PPDK) by catalyzing its phosphorylation/dephosphorylation. In Staphylococcus saprophyticus subsp. saprophyticus (strain ATCC 15305 / DSM 20229 / NCIMB 8711 / NCTC 7292 / S-41), this protein is Putative pyruvate, phosphate dikinase regulatory protein 1.